We begin with the raw amino-acid sequence, 357 residues long: Alanine racemase, catabolic (357 aa).

Catalysis depends on Lys-33, which acts as the Proton acceptor; specific for D-alanine. Position 33 is an N6-(pyridoxal phosphate)lysine (Lys-33). Arg-129 contributes to the substrate binding site. Catalysis depends on Tyr-253, which acts as the Proton acceptor; specific for L-alanine. Met-301 serves as a coordination point for substrate.

Belongs to the alanine racemase family. The cofactor is pyridoxal 5'-phosphate.

It carries out the reaction L-alanine = D-alanine. It functions in the pathway amino-acid biosynthesis; D-alanine biosynthesis; D-alanine from L-alanine: step 1/1. Functionally, isomerizes L-alanine to D-alanine which is then likely oxidized to pyruvate by DadA. Shows racemase activity with both alanine stereoisomers, negligible activity with D-cysteine and L-serine, and exhibits no activity with the remaining natural chiral amino acids. This chain is Alanine racemase, catabolic, found in Pseudomonas putida (strain ATCC 47054 / DSM 6125 / CFBP 8728 / NCIMB 11950 / KT2440).